A 1460-amino-acid chain; its full sequence is Actin cytoskeleton-regulatory complex protein PAN1 (1460 aa).

Residues 1-56 (MYNPYQQQGMGYQQQQQQQQQQPNGFYPQQQQGQSSNQPQGQPQPQQQMAFNQPQA) are compositionally biased toward low complexity. Residues 1 to 151 (MYNPYQQQGM…SIQPQGTGYY (151 aa)) form a disordered region. The span at 65–79 (SFGNSFSTMPQQPQT) shows a compositional bias: polar residues. 3 stretches are compositionally biased toward low complexity: residues 80–110 (GYNN…VKPQ), 117–128 (NSSMPMMNTTGT), and 136–146 (QQPQLQSIQPQ). 5 repeat units span residues 142-153 (SIQPQGTGYYQS), 164-175 (PLQSQGTGYYVS), 188-199 (PLQAQGTGYYQS), 215-226 (PLKPQQTGFYLQ), and 235-246 (PLKPTATGFVNS). The tract at residues 142–568 (SIQPQGTGYY…TAQKTGFGNN (427 aa)) is 15 X 12 AA tandem repeats of [SPNAG]-[IL]-[QKNGT]-[PSA]-[QT]-[GQAPISTLYK]-T-G-[YFGML]-[YVMGAQL]-[QVLNPAG]-[ASQPN]. Residues 185-197 (TQQPLQAQGTGYY) show a composition bias toward polar residues. The disordered stretch occupies residues 185–214 (TQQPLQAQGTGYYQSQPQQVPPPQQAQSLQ). Position 241 is a phosphothreonine (threonine 241). EF-hand domains lie at 269-304 (QDQA…SGLP) and 306-338 (SQLA…INDV). The EH 1 domain maps to 270–359 (DQAKFETLFR…SKTKNEVSSF (90 aa)). 11 tandem repeats follow at residues 328 to 350 (FALA…ELDS), 392 to 403 (NLQPQPTGYMPQ), 409 to 420 (PLQSQITGGGVA), 422 to 433 (ALNPQSTGFMAP), 446 to 457 (GLNPQITGGAPA), 467 to 478 (ALQPQTTGMMPQ), 491 to 502 (NLGPQLTGGALQ), 503 to 511 (SQYTGGYGS), 531 to 541 (GLQSQLTGLQP), 542 to 549 (QPTGFLPP), and 557 to 568 (PLTAQKTGFGNN). The segment at 328–672 (FALAMHLIND…GKPIPNVLPS (345 aa)) is 2 X 23 AA repeats of F-A-L-[AG]-M-H-L-[IV]-[NY]-[DG]-[VK]-L-[QN]-G-[DK]-[TP]-I-P-[YN]-[EV]-L-[DP]-S. Threonine 563 is modified (phosphothreonine). The EH 2 domain occupies 593–681 (EKSLFYKFLK…SSLIPSSTKL (89 aa)). The region spanning 625–660 (LNRADLEQIWNLCDINNTGQLNKQEFALGMHLVYGK) is the EF-hand 3 domain. The Ca(2+) site is built by aspartate 638, asparagine 640, threonine 642, glutamine 644, and glutamate 649. The stretch at 650–672 (FALGMHLVYGKLNGKPIPNVLPS) is one 2-2 repeat. 4 disordered regions span residues 729–758 (SAKN…TDDI), 880–901 (ALTG…QQSA), 969–1127 (NSNK…EKRL), and 1149–1460 (LRKQ…PPLP). Residues 735 to 757 (QSSFSSPSAKSVNHSSSTLQTDD) are compositionally biased toward polar residues. Phosphoserine is present on residues serine 739 and serine 749. The segment covering 888–899 (SEDSLSMEDEQQ) has biased composition (acidic residues). Residues 973–988 (SVTESSPFVPSSTPTP) show a composition bias toward low complexity. 2 positions are modified to phosphothreonine: threonine 985 and threonine 987. Serine 995 carries the phosphoserine modification. A compositionally biased stretch (basic and acidic residues) spans 1003-1030 (TAEERAAYLKEQAKKRMKEKLAKFDKNR). Residues 1048 to 1058 (QPQQIAGSSNL) are compositionally biased toward polar residues. A run of 5 repeats spans residues 1076–1081 (QPTQPV), 1082–1087 (QSTQPV), 1088–1093 (QPTQPV), 1094–1099 (QPTQPV), and 1100–1105 (QPTQPV). A 5 X 6 AA tandem repeats of Q-[PS]-T-Q-P-V region spans residues 1076–1105 (QPTQPVQSTQPVQPTQPVQPTQPVQPTQPV). Over residues 1076–1106 (QPTQPVQSTQPVQPTQPVQPTQPVQPTQPVQ) the composition is skewed to low complexity. Residues 1111-1170 (AKQESDDEDEDDEEKRLQEELKRLKLKKKADKEKRLAALRKQIEDAQNESDEEETNGKDN) are a coiled coil. Serine 1160 bears the Phosphoserine mark. A compositionally biased stretch (low complexity) spans 1175-1188 (VNVPQAAPVAPSAA). A compositionally biased stretch (polar residues) spans 1210 to 1221 (KNSTGLPSTTMG). A compositionally biased stretch (low complexity) spans 1228–1239 (DASASSTSTFDA). Residues serine 1230 and serine 1233 each carry the phosphoserine modification. A compositionally biased stretch (basic and acidic residues) spans 1240–1252 (RAAEMQRRIQRGL). The segment covering 1253 to 1265 (DEDEDDGWSDEDE) has biased composition (acidic residues). The residue at position 1261 (serine 1261) is a Phosphoserine. Residues 1272–1288 (VDNKVEEAKIGHPDHAR) show a composition bias toward basic and acidic residues. The segment covering 1289–1298 (APPVTAAPLP) has biased composition (low complexity). Repeat copies occupy residues 1295–1300 (APLPSV), 1301–1306 (TPVPPA), 1307–1312 (VPVPQA), 1320–1325 (SPIPIA), 1326–1330 (PIPPS), 1335–1340 (PPVPLA), 1341–1346 (PPLPAV), and 1352–1357 (PPIPSA). Residues 1295–1357 (APLPSVTPVP…GFQEPPIPSA (63 aa)) are 8 X 6 AA repeats of [ATVSP]-P-[LVI]-P-[SPQILA]-[VAS]. Composition is skewed to pro residues over residues 1299-1308 (SVTPVPPAVP) and 1323-1344 (PIAP…PPLP). Position 1301 is a phosphothreonine (threonine 1301). A compositionally biased stretch (pro residues) spans 1447–1460 (SIPPAGIPPPPPLP).

Belongs to the PAN1 family. As to quaternary structure, component of the PAN1 actin cytoskeleton-regulatory complex. In terms of processing, phosphorylated by PRK1 on threonine residues in the L-x-x-Q-x-T-G motif of repeats 1-6 to 1-15. Phosphorylated by ARK1.

The protein resides in the cell membrane. It localises to the endosome membrane. The protein localises to the cytoplasm. It is found in the cytoskeleton. Its subcellular location is the actin patch. Component of the PAN1 actin cytoskeleton-regulatory complex required for the internalization of endosomes during actin-coupled endocytosis. The complex links the site of endocytosis to the cell membrane-associated actin cytoskeleton. Mediates uptake of external molecules and vacuolar degradation of plasma membrane proteins. Plays a role in the proper organization of the cell membrane-associated actin cytoskeleton and promotes its destabilization. This is Actin cytoskeleton-regulatory complex protein PAN1 (PAN1) from Saccharomyces cerevisiae (strain YJM789) (Baker's yeast).